A 468-amino-acid chain; its full sequence is Glutamine synthetase (468 aa).

Positions 13–97 constitute a GS beta-grasp domain; the sequence is NEVKFVDLRF…IRCDILEPAT (85 aa). One can recognise a GS catalytic domain in the interval 105 to 468; that stretch reads PRSIAKRAED…PVEFELYYSV (364 aa). Mg(2+) contacts are provided by E130 and E132. E208 is an ATP binding site. Residues E213 and E220 each coordinate Mg(2+). Residues 264–265 and G265 each bind L-glutamate; that span reads NG. H269 serves as a coordination point for Mg(2+). ATP-binding positions include 271 to 273 and S273; that span reads HQS. L-glutamate is bound by residues R321, E327, and R339. R339, R344, and K352 together coordinate ATP. Residue E357 participates in Mg(2+) binding. Position 359 (R359) interacts with L-glutamate. Y397 bears the O-AMP-tyrosine mark.

This sequence belongs to the glutamine synthetase family. In terms of assembly, oligomer of 12 subunits arranged in the form of two hexameric ring. It depends on Mg(2+) as a cofactor.

Its subcellular location is the cytoplasm. It carries out the reaction L-glutamate + NH4(+) + ATP = L-glutamine + ADP + phosphate + H(+). Its activity is regulated as follows. The activity of this enzyme could be controlled by adenylation under conditions of abundant glutamine. In terms of biological role, catalyzes the ATP-dependent biosynthesis of glutamine from glutamate and ammonia. The protein is Glutamine synthetase of Vibrio alginolyticus.